A 381-amino-acid chain; its full sequence is Pentraxin-related protein PTX3 (381 aa).

The signal sequence occupies residues 1-17 (MHLLAILFCALWSAVLA). 2 coiled-coil regions span residues 74 to 101 (LQAT…SLAR) and 143 to 167 (EEAG…HAVQ). Intrachain disulfides connect cysteine 179-cysteine 357 and cysteine 210-cysteine 271. The Pentraxin (PTX) domain maps to 179-381 (CETAILFPMR…QPHGGAQYVS (203 aa)). Residue asparagine 220 is glycosylated (N-linked (GlcNAc...) asparagine).

Homooctamer; disulfide-linked. Binds to C1q. As to quaternary structure, (Microbial infection) Interacts with SARS coronavirus-2/SARS-CoV-2 Nucleoprotein and Spike protein homotrimer. Post-translationally, glycosylated.

Its subcellular location is the secreted. In terms of biological role, plays a role in the regulation of innate resistance to pathogens, inflammatory reactions, possibly clearance of self-components and female fertility. This chain is Pentraxin-related protein PTX3, found in Homo sapiens (Human).